Reading from the N-terminus, the 210-residue chain is MSDQAKDERAPSEAEAAEANAERTEGSIDGDYEALVRLLKENEELKDRALRVAAEMENLRRRTARDVHDARTYAVANFARDMLSVSDNLRRALDAIPAEAKASGDAGFKALIEGVDLTERAMLSALERHGVKKLAPEGEKFDPNFHQAMFEVPNPDVPANTVVQVVQPGYSIGERVLRPAMVGVAKGGPKIAAEAPVEPGPVNEQAEKDA.

Positions 1–12 are enriched in basic and acidic residues; that stretch reads MSDQAKDERAPS. 2 disordered regions span residues 1-26 and 191-210; these read MSDQAKDERAPSEAEAAEANAERTEG and IAAEAPVEPGPVNEQAEKDA.

Belongs to the GrpE family. As to quaternary structure, homodimer.

It is found in the cytoplasm. Functionally, participates actively in the response to hyperosmotic and heat shock by preventing the aggregation of stress-denatured proteins, in association with DnaK and GrpE. It is the nucleotide exchange factor for DnaK and may function as a thermosensor. Unfolded proteins bind initially to DnaJ; upon interaction with the DnaJ-bound protein, DnaK hydrolyzes its bound ATP, resulting in the formation of a stable complex. GrpE releases ADP from DnaK; ATP binding to DnaK triggers the release of the substrate protein, thus completing the reaction cycle. Several rounds of ATP-dependent interactions between DnaJ, DnaK and GrpE are required for fully efficient folding. This Mesorhizobium japonicum (strain LMG 29417 / CECT 9101 / MAFF 303099) (Mesorhizobium loti (strain MAFF 303099)) protein is Protein GrpE.